Reading from the N-terminus, the 271-residue chain is 3-methyl-2-oxobutanoate hydroxymethyltransferase 2 (271 aa).

Asp-53 and Asp-92 together coordinate Mg(2+). Residues Asp-53–Ser-54, Asp-92, and Lys-120 each bind 3-methyl-2-oxobutanoate. Glu-122 lines the Mg(2+) pocket. Residue Glu-189 is the Proton acceptor of the active site.

The protein belongs to the PanB family. In terms of assembly, homodecamer; pentamer of dimers. Requires Mg(2+) as cofactor.

It is found in the cytoplasm. It carries out the reaction 3-methyl-2-oxobutanoate + (6R)-5,10-methylene-5,6,7,8-tetrahydrofolate + H2O = 2-dehydropantoate + (6S)-5,6,7,8-tetrahydrofolate. It functions in the pathway cofactor biosynthesis; (R)-pantothenate biosynthesis; (R)-pantoate from 3-methyl-2-oxobutanoate: step 1/2. Functionally, catalyzes the reversible reaction in which hydroxymethyl group from 5,10-methylenetetrahydrofolate is transferred onto alpha-ketoisovalerate to form ketopantoate. The polypeptide is 3-methyl-2-oxobutanoate hydroxymethyltransferase 2 (Burkholderia lata (strain ATCC 17760 / DSM 23089 / LMG 22485 / NCIMB 9086 / R18194 / 383)).